We begin with the raw amino-acid sequence, 545 residues long: Membrane protein insertase YidC (545 aa).

Transmembrane regions (helical) follow at residues Ala10–Ser30, Leu319–Pro339, Trp341–Phe361, Ile407–Val427, Ile467–Ser487, and Met502–Ile522.

The protein belongs to the OXA1/ALB3/YidC family. Type 1 subfamily. In terms of assembly, interacts with the Sec translocase complex via SecD. Specifically interacts with transmembrane segments of nascent integral membrane proteins during membrane integration.

The protein localises to the cell inner membrane. In terms of biological role, required for the insertion and/or proper folding and/or complex formation of integral membrane proteins into the membrane. Involved in integration of membrane proteins that insert both dependently and independently of the Sec translocase complex, as well as at least some lipoproteins. Aids folding of multispanning membrane proteins. The sequence is that of Membrane protein insertase YidC from Borrelia duttonii (strain Ly).